The sequence spans 315 residues: Putative S-adenosyl-L-methionine-dependent methyltransferase MAV_4557 (315 aa).

Residues aspartate 134 and 163–164 (DL) contribute to the S-adenosyl-L-methionine site.

This sequence belongs to the UPF0677 family.

Functionally, exhibits S-adenosyl-L-methionine-dependent methyltransferase activity. This chain is Putative S-adenosyl-L-methionine-dependent methyltransferase MAV_4557, found in Mycobacterium avium (strain 104).